The chain runs to 372 residues: Alpha-L-fucosidase 3 (372 aa).

A signal peptide spans 1–23; the sequence is MNPILSSLFALSLLSSLSPSTHA. The Nucleophile role is filled by Ser-37. Residues Asn-96, Asn-114, Asn-139, and Asn-182 are each glycosylated (N-linked (GlcNAc...) asparagine). Catalysis depends on residues Asp-345 and His-348.

Belongs to the 'GDSL' lipolytic enzyme family. As to expression, high expression in younger leaves and in the apical region of the inflorescence stem.

It is found in the secreted. Its subcellular location is the extracellular space. The protein resides in the apoplast. It catalyses the reaction an alpha-L-fucoside + H2O = L-fucose + an alcohol. Functionally, hydrolyzes alpha-1,2-linked fucose. Also active on fucosylated xyloglucan oligosaccharides. The protein is Alpha-L-fucosidase 3 (FXG1) of Arabidopsis thaliana (Mouse-ear cress).